The following is a 511-amino-acid chain: Maturase K (511 aa).

It belongs to the intron maturase 2 family. MatK subfamily.

It localises to the plastid. It is found in the chloroplast. In terms of biological role, usually encoded in the trnK tRNA gene intron. Probably assists in splicing its own and other chloroplast group II introns. This Lolium perenne (Perennial ryegrass) protein is Maturase K.